A 927-amino-acid polypeptide reads, in one-letter code: MGRPGMDSSEGRESNGVVPERNGGAVPAKQQLDGKDTLRYANILRSRNKFAEALQLYNNVLEKDEANVEALIGKGICLQAQSLPMQAIECFNEAVRIDPGNACALTYCGMIYKDEGHLVEAAEAYQKARNADPSYKPAAEFLAIVLTDLGTSLKLAGNTEEGIQKYCEALEVDSHYAPAYYNLGVVYSEMMQFDLALTCYEKAALERPLYAEAYCNMGVIYKNRGELEAAIACYERCLTISPNFEIAKNNMAIALTDLGTKVKIEGDINQGVAYYKKALFYNWHYADAMYNLGVAYGEMLNFEMAIVFYELALHFNPRCAEACNNLGVIYKDRDNLDKAVECYQMALSIKPNFSQSLNNLGVVYTVQGKMDAASSMIQKAIFANSTYAEAYNNLGVLYRDAGSITSAVQAYEKCLQIDPDSRNAGQNRLLALNYIDEGFDDKLYQAHREWGKRFLKLYPQYTSWDNPKVADRPLVIGYVSPDYFTHSVSYFIEAPLAHHDYSNYKVVVYSGVVKADAKTLRFKDKVLKKGGLWRDIYGIDEKKVASLVREDKVDILVELTGHTANNKLGTMACRPAPIQVTWIGYPNTTGLPTIDYRITDSLADPPDTTQKHVEELVRLPESFLCYSPSPEAGPVCPTPAILNGFITFGSFNNLAKITPKVLQVWAKILCAVPNSRLVVKCKPFCCDSIRQKFLSTLAELGLEPLRVDLLPLIHLNHDHMQAYSLMDISLDTFPYAGTTTTCESLYMGVPCVTMAGSVHAHNVGVSLLTKVGLGRLVAKSENEYVSLALDLAADVTALQELRMSLRGLMAKSPVCDGENFTRGLESAYRNMWRRYCDGDAPALRRLDLLQEEPCSNNNKQDFDDNQVAKLADLKAQRVDAAVDGDKQSQLTAHAAVVGEVQQAPIMVNGVSSPVSSGKVEANGHISR.

A disordered region spans residues 1–31; sequence MGRPGMDSSEGRESNGVVPERNGGAVPAKQQ. TPR repeat units follow at residues 34–67, 68–101, 102–135, 143–176, 177–210, 211–244, 252–285, 286–319, 320–353, 355–387, and 388–421; these read GKDT…DEAN, VEAL…DPGN, ACAL…DPSY, AIVL…DSHY, APAY…RPLY, AEAY…SPNF, AIAL…NWHY, ADAM…NPRC, AEAC…KPNF, QSLN…NSTY, and AEAY…DPDS. The catalytic region stretch occupies residues 422–927; the sequence is RNAGQNRLLA…KVEANGHISR (506 aa).

This sequence belongs to the glycosyltransferase 41 family. O-GlcNAc transferase subfamily.

It localises to the nucleus. It carries out the reaction L-seryl-[protein] + UDP-N-acetyl-alpha-D-glucosamine = 3-O-(N-acetyl-beta-D-glucosaminyl)-L-seryl-[protein] + UDP + H(+). The catalysed reaction is L-threonyl-[protein] + UDP-N-acetyl-alpha-D-glucosamine = 3-O-(N-acetyl-beta-D-glucosaminyl)-L-threonyl-[protein] + UDP + H(+). It participates in protein modification; protein glycosylation. Probable O-linked N-acetylglucosamine transferase (OGT) involved in various processes such as gibberellin (GA) signaling pathway. OGTs catalyze the addition of nucleotide-activated sugars directly onto the polypeptide through O-glycosidic linkage with the hydroxyl of serine or threonine. Probably acts by adding O-linked sugars to yet unknown proteins. This Oryza sativa subsp. japonica (Rice) protein is Probable UDP-N-acetylglucosamine--peptide N-acetylglucosaminyltransferase SPINDLY (SPY).